Consider the following 231-residue polypeptide: MSMLYYTLLIAILISVQAAPKTKDHAPARSSAKSRIPHHTHRTKSLHHSHGKLEAKEPSYFRNVTVDPKLFRKRKFRSPRVLFSTQPPPLSEDFQHLEYLDDEESLNKTIRAKRTVHPVLHKGEYSVCDSVSMWVGEKTKATDIKGKEVTVLGEVNINNSVFKQYFFETKCRDPKPVSSGCRGIDAKHWNSYCTTTHTFVKALTMEGKQAAWRFIRIDTACVCVLSRKGRT.

The N-terminal stretch at 1–18 (MSMLYYTLLIAILISVQA) is a signal peptide. Residues 19-114 (APKTKDHAPA…SLNKTIRAKR (96 aa)) constitute a propeptide that is removed on maturation. The tract at residues 24-53 (DHAPARSSAKSRIPHHTHRTKSLHHSHGKL) is disordered. Residues 35-50 (RIPHHTHRTKSLHHSH) are compositionally biased toward basic residues. N-linked (GlcNAc...) asparagine glycosylation is found at N63, N107, and N158. Cystine bridges form between C128–C193, C171–C221, and C181–C223.

This sequence belongs to the NGF-beta family. As to quaternary structure, homodimer.

It localises to the secreted. Nerve growth factor is important for the development and maintenance of the sympathetic and sensory nervous systems. It stimulates division and differentiation of sympathetic and embryonic sensory neurons. This Xenopus laevis (African clawed frog) protein is Nerve growth factor (ngf).